The following is a 763-amino-acid chain: MAP7 domain-containing protein 2 (763 aa).

Residues 1–11 show a composition bias toward gly residues; the sequence is MERSGGNGAGA. Disordered regions lie at residues 1–72, 102–127, and 140–531; these read MERS…REKC, LEEQ…LREE, and ERTQ…KAMI. Residues 12–31 are compositionally biased toward low complexity; the sequence is RAGAPSEGAAKGSSLLSAKS. Over residues 53 to 72 the composition is skewed to basic and acidic residues; sequence LKSDERQRLAKERREEREKC. Polar residues-rich tracts occupy residues 184-212 and 241-251; these read PSDT…NLPK and LKSSYKSSPTR. Low complexity predominate over residues 312–321; sequence KRSSSPVKSK. 3 stretches are compositionally biased toward basic and acidic residues: residues 354–372, 381–420, and 437–531; these read ETLK…KEGA, PREE…EHSA, and LAEK…KAMI. Residues 434-575 are a coiled coil; sequence AKILAEKRRQ…QERLERKKRI (142 aa).

Belongs to the MAP7 family. In terms of assembly, interacts (via N-terminus) with microtubules; facilitates microtubule stabilization. Interacts with kinesin-1 family members, KIF5A, KIF5B and KIF5C. Detected only in the brain and testis (at the protein level).

The protein resides in the cytoplasm. Its subcellular location is the cytoskeleton. The protein localises to the microtubule organizing center. It is found in the centrosome. It localises to the cell projection. The protein resides in the axon. In terms of biological role, microtubule-stabilizing protein involved in the control of cell motility and neurite outgrowth. Acts as a critical cofactor for kinesin transport; in the proximal axon regulates kinesin-1 family members, KIF5A, KIF5B and KIF5C recruitment to microtubules and contributes to kinesin-1-mediated transport in the axons. The polypeptide is MAP7 domain-containing protein 2 (Map7d2) (Rattus norvegicus (Rat)).